We begin with the raw amino-acid sequence, 81 residues long: Photosystem I iron-sulfur center (81 aa).

2 4Fe-4S ferredoxin-type domains span residues 2-31 (AHTV…MVPW) and 37-68 (GQIA…IRVY). 8 residues coordinate [4Fe-4S] cluster: Cys11, Cys14, Cys17, Cys21, Cys48, Cys51, Cys54, and Cys58.

As to quaternary structure, the cyanobacterial PSI reaction center is composed of one copy each of PsaA,B,C,D,E,F,I,J,K,L,M and X, and forms trimeric complexes. [4Fe-4S] cluster is required as a cofactor.

Its subcellular location is the cellular thylakoid membrane. It carries out the reaction reduced [plastocyanin] + hnu + oxidized [2Fe-2S]-[ferredoxin] = oxidized [plastocyanin] + reduced [2Fe-2S]-[ferredoxin]. In terms of biological role, apoprotein for the two 4Fe-4S centers FA and FB of photosystem I (PSI); essential for photochemical activity. FB is the terminal electron acceptor of PSI, donating electrons to ferredoxin. The C-terminus interacts with PsaA/B/D and helps assemble the protein into the PSI complex. Required for binding of PsaD and PsaE to PSI. PSI is a plastocyanin/cytochrome c6-ferredoxin oxidoreductase, converting photonic excitation into a charge separation, which transfers an electron from the donor P700 chlorophyll pair to the spectroscopically characterized acceptors A0, A1, FX, FA and FB in turn. This Synechococcus elongatus protein is Photosystem I iron-sulfur center (psaC).